The chain runs to 259 residues: Bis(5'-nucleosyl)-tetraphosphatase, symmetrical (259 aa).

Belongs to the Ap4A hydrolase family.

The catalysed reaction is P(1),P(4)-bis(5'-adenosyl) tetraphosphate + H2O = 2 ADP + 2 H(+). In terms of biological role, hydrolyzes diadenosine 5',5'''-P1,P4-tetraphosphate to yield ADP. The sequence is that of Bis(5'-nucleosyl)-tetraphosphatase, symmetrical (apaH) from Klebsiella aerogenes (Enterobacter aerogenes).